Here is a 417-residue protein sequence, read N- to C-terminus: NADH-quinone oxidoreductase subunit D (417 aa).

The protein belongs to the complex I 49 kDa subunit family. In terms of assembly, NDH-1 is composed of 14 different subunits. Subunits NuoB, C, D, E, F, and G constitute the peripheral sector of the complex.

The protein resides in the cell inner membrane. It carries out the reaction a quinone + NADH + 5 H(+)(in) = a quinol + NAD(+) + 4 H(+)(out). Its function is as follows. NDH-1 shuttles electrons from NADH, via FMN and iron-sulfur (Fe-S) centers, to quinones in the respiratory chain. The immediate electron acceptor for the enzyme in this species is believed to be ubiquinone. Couples the redox reaction to proton translocation (for every two electrons transferred, four hydrogen ions are translocated across the cytoplasmic membrane), and thus conserves the redox energy in a proton gradient. The polypeptide is NADH-quinone oxidoreductase subunit D (Francisella tularensis subsp. tularensis (strain FSC 198)).